A 170-amino-acid chain; its full sequence is Acetyl-CoA decarbonylase/synthase complex subunit epsilon 1 (170 aa).

The protein belongs to the CdhB family. Heterotetramer of two alpha and two epsilon subunits. The ACDS complex is made up of alpha, epsilon, beta, gamma and delta subunits with a probable stoichiometry of (alpha(2)epsilon(2))(4)-beta(8)-(gamma(1)delta(1))(8).

Its pathway is one-carbon metabolism; methanogenesis from acetate. Part of a complex that catalyzes the reversible cleavage of acetyl-CoA, allowing growth on acetate as sole source of carbon and energy. The alpha-epsilon subcomponent functions as a carbon monoxide dehydrogenase. The precise role of the epsilon subunit is unclear; it may have a stabilizing role within the alpha(2)epsilon(2) component and/or be involved in electron transfer to FAD during a potential FAD-mediated CO oxidation. The sequence is that of Acetyl-CoA decarbonylase/synthase complex subunit epsilon 1 (cdhB1) from Methanosarcina mazei (strain ATCC BAA-159 / DSM 3647 / Goe1 / Go1 / JCM 11833 / OCM 88) (Methanosarcina frisia).